A 655-amino-acid polypeptide reads, in one-letter code: Spastin (655 aa).

The Cytoplasmic segment spans residues 1–58 (MLFDLINSFLKNGINNSNNNNNNNNNKNNFYNSLEDDDYLLNNQTTKVSLYLYFFIFA). An intramembrane region (helical) is located at residues 59–79 (FMFLVVDLIMLYYKHRENIES). At 80–655 (RETDLSLKLN…EKWNQKFGTI (576 aa)) the chain is on the cytoplasmic side. Residues 102–140 (KSSPTTSTTTTTITPTTTSSSQLRQPSTPKTTTKTINSP) are compositionally biased toward low complexity. Positions 102 to 151 (KSSPTTSTTTTTITPTTTSSSQLRQPSTPKTTTKTINSPPSTPKSPPPLP) are disordered. The segment covering 141–151 (PSTPKSPPPLP) has biased composition (pro residues). The 64-residue stretch at 169 to 232 (LNEAKSQIDS…KRAEYLKNEL (64 aa)) folds into the MIT domain. A disordered region spans residues 261–325 (EQQQQQQQQS…TITSPGNKYG (65 aa)). Residues 262 to 320 (QQQQQQQQSSSTYRNSLNLSSSKSNSTINNRHSISSLSSLNSTTATTTTPSNTSTITSP) are compositionally biased toward low complexity. 424–431 (GPPGNGKT) provides a ligand contact to ATP.

It belongs to the AAA ATPase family. Spastin subfamily. Homohexamer. The homohexamer is stabilized by ATP-binding. The homohexamer may adopt a ring conformation through which microtubules pass prior to being severed. Interacts with microtubules.

Its subcellular location is the membrane. It localises to the cytoplasm. The protein resides in the cytoskeleton. The protein localises to the microtubule organizing center. It is found in the centrosome. The enzyme catalyses n ATP + n H2O + a microtubule = n ADP + n phosphate + (n+1) alpha/beta tubulin heterodimers.. In terms of biological role, ATP-dependent microtubule severing protein. Microtubule severing may promote reorganization of cellular microtubule arrays and the release of microtubules from the microtubule organizing center following nucleation. The protein is Spastin of Dictyostelium discoideum (Social amoeba).